Consider the following 1134-residue polypeptide: Early transcription factor large subunit homolog (1134 aa).

In terms of domain architecture, Helicase ATP-binding spans 52–352 (KGGRAFFPCD…PNGQPLQRQQ (301 aa)). Residue 99 to 106 (WQTGTGKS) participates in ATP binding. Positions 281-284 (DEIH) match the DEAH box motif. The 202-residue stretch at 524-725 (MMKDILSIIR…EGDKALRKHA (202 aa)) folds into the Helicase C-terminal domain.

It belongs to the DEAD box helicase family. DEAH subfamily.

The protein resides in the virion. The enzyme catalyses ATP + H2O = ADP + phosphate + H(+). Functionally, putative initation factor. The polypeptide is Early transcription factor large subunit homolog (African swine fever virus (isolate Pig/Kenya/KEN-50/1950) (ASFV)).